Here is a 333-residue protein sequence, read N- to C-terminus: Secreted mono- and diacylglycerol lipase 1 (333 aa).

The first 16 residues, Met1 to Ala16, serve as a signal peptide directing secretion. Intrachain disulfides connect Cys56-Cys268 and Cys276-Cys298. The Nucleophile role is filled by Ser176. Catalysis depends on residues Asp230 and His288.

It belongs to the AB hydrolase superfamily. Lipase family. Class 3 subfamily.

Its subcellular location is the secreted. The catalysed reaction is a monoacylglycerol + H2O = glycerol + a fatty acid + H(+). It carries out the reaction a diacylglycerol + H2O = a monoacylglycerol + a fatty acid + H(+). In terms of biological role, secreted mono- and diacylglycerol lipase that allows the use of hydrolyzed lipids as carbon source and might play a role in pathogenicity. Shows lipolytic activity towards olive oil and p-nitrophenylpalmitate. This Fusarium solani (Filamentous fungus) protein is Secreted mono- and diacylglycerol lipase 1.